We begin with the raw amino-acid sequence, 1275 residues long: uncharacterized protein (1275 aa).

This is an uncharacterized protein from Homo sapiens (Human).